Here is a 754-residue protein sequence, read N- to C-terminus: 5-methyltetrahydropteroyltriglutamate--homocysteine methyltransferase (754 aa).

5-methyltetrahydropteroyltri-L-glutamate-binding positions include 17-20 (RELK) and Lys117. L-homocysteine contacts are provided by residues 431 to 433 (IGS) and Glu484. L-methionine contacts are provided by residues 431–433 (IGS) and Glu484. 5-methyltetrahydropteroyltri-L-glutamate-binding positions include 515-516 (RC) and Trp561. Residue Asp599 coordinates L-homocysteine. Asp599 serves as a coordination point for L-methionine. Glu605 is a binding site for 5-methyltetrahydropteroyltri-L-glutamate. Zn(2+)-binding residues include His641, Cys643, and Glu665. The Proton donor role is filled by His694. Cys726 contacts Zn(2+).

This sequence belongs to the vitamin-B12 independent methionine synthase family. It depends on Zn(2+) as a cofactor.

It carries out the reaction 5-methyltetrahydropteroyltri-L-glutamate + L-homocysteine = tetrahydropteroyltri-L-glutamate + L-methionine. It participates in amino-acid biosynthesis; L-methionine biosynthesis via de novo pathway; L-methionine from L-homocysteine (MetE route): step 1/1. Functionally, catalyzes the transfer of a methyl group from 5-methyltetrahydrofolate to homocysteine resulting in methionine formation. The chain is 5-methyltetrahydropteroyltriglutamate--homocysteine methyltransferase from Salmonella newport (strain SL254).